The following is a 363-amino-acid chain: Probable protein phosphatase 2C member 13, mitochondrial (363 aa).

Residues 1–59 (MVCFASLRRALPLLLRATTTTTPRFLLPRALSGGVGGGAAVDARALLRGHSGWRGLRVA) constitute a mitochondrion transit peptide. The PPM-type phosphatase domain occupies 111–357 (KCGYSSFRGK…DNITCIVVQF (247 aa)). Residues Asp-147, Gly-148, Asp-309, and Asp-348 each coordinate Mn(2+).

This sequence belongs to the PP2C family. Mg(2+) is required as a cofactor. It depends on Mn(2+) as a cofactor. As to expression, highly expressed in mature pollen grains.

The protein localises to the mitochondrion. It carries out the reaction O-phospho-L-seryl-[protein] + H2O = L-seryl-[protein] + phosphate. The catalysed reaction is O-phospho-L-threonyl-[protein] + H2O = L-threonyl-[protein] + phosphate. In terms of biological role, probable protein phosphatase that may play a role as a mitochondrial signal transduction mediator in pollen germination. May function in retrograde signaling from the mitochondria to the nucleus. May be a downstream factor of cytoplasmic male sterility (CMS). CMS is caused by genetic incompatibility between nuclei and mitochondria within male reproductive organs. This chain is Probable protein phosphatase 2C member 13, mitochondrial, found in Oryza sativa subsp. japonica (Rice).